The chain runs to 192 residues: 3-isopropylmalate dehydratase small subunit (192 aa).

This sequence belongs to the LeuD family. LeuD type 1 subfamily. As to quaternary structure, heterodimer of LeuC and LeuD.

The enzyme catalyses (2R,3S)-3-isopropylmalate = (2S)-2-isopropylmalate. It functions in the pathway amino-acid biosynthesis; L-leucine biosynthesis; L-leucine from 3-methyl-2-oxobutanoate: step 2/4. In terms of biological role, catalyzes the isomerization between 2-isopropylmalate and 3-isopropylmalate, via the formation of 2-isopropylmaleate. This chain is 3-isopropylmalate dehydratase small subunit, found in Zymomonas mobilis subsp. mobilis (strain ATCC 31821 / ZM4 / CP4).